Reading from the N-terminus, the 136-residue chain is C-type natriuretic peptide prohormone (136 aa).

An N-terminal signal peptide occupies residues 1–21 (MSGQTSFYCGLLLVLLIQAQA). Cysteines 120 and 136 form a disulfide.

This sequence belongs to the natriuretic peptide family. As to expression, CNP-115 is differentially processed to produce CNP-38 and CNP-39 in the heart and CNP-22 in the brain.

It localises to the secreted. In terms of biological role, hormone which may be vasoactive and natriuretic. Has a cGMP-stimulating activity. This chain is C-type natriuretic peptide prohormone, found in Triakis scyllium (Banded houndshark).